The primary structure comprises 3625 residues: Spectinabilin polyketide synthase system protein NorA' (3625 aa).

Residues 33–459 (REPVAVVSMA…GTNAHVILEQ (427 aa)) form the Ketosynthase family 3 (KS3) 1 domain. Catalysis depends on for beta-ketoacyl synthase 1 activity residues C206, H341, and H381. Residues 564 to 881 (LVFPGQGSQW…SLGELFAGGR (318 aa)) form the Malonyl-CoA:ACP transacylase (MAT) 1 domain. The tract at residues 930–1054 (HPWWGAVTEL…GTLTRTARPA (125 aa)) is N-terminal hotdog fold 1. The region spanning 930–1200 (HPWWGAVTEL…VRPLTPGSGA (271 aa)) is the PKS/mFAS DH 1 domain. H962 (proton acceptor; for dehydratase activity 1) is an active-site residue. Residues 1066–1200 (ADPLPVDRIY…VRPLTPGSGA (135 aa)) are C-terminal hotdog fold 1. D1125 (proton donor; for dehydratase activity 1) is an active-site residue. In terms of domain architecture, Ketoreductase (KR) 1 spans 1443 to 1620 (GTVLVTGAAG…LSLAWGLWAE (178 aa)). Positions 1722–1797 (GAVLETVRAQ…SLAAHLLGRL (76 aa)) constitute a Carrier 1 domain. S1757 carries the post-translational modification O-(pantetheine 4'-phosphoryl)serine. Positions 1815–2231 (DEPIAIIGMA…GTNAHVVLEQ (417 aa)) constitute a Ketosynthase family 3 (KS3) 2 domain. Residues C1978, H2113, and H2153 each act as for beta-ketoacyl synthase 2 activity in the active site. The region spanning 2336-2656 (VFVFPGQGAQ…VAEAHTRGIA (321 aa)) is the Malonyl-CoA:ACP transacylase (MAT) 2 domain. Residues 2704-2829 (HPLLGARMEL…GLLSEEEPAT (126 aa)) are N-terminal hotdog fold 2. The PKS/mFAS DH 2 domain occupies 2704-2981 (HPLLGARMEL…ARPVPAGQLR (278 aa)). H2736 (proton acceptor; for dehydratase activity 2) is an active-site residue. The tract at residues 2842–2981 (AEPIELVGFY…ARPVPAGQLR (140 aa)) is C-terminal hotdog fold 2. D2903 functions as the Proton donor; for dehydratase activity 2 in the catalytic mechanism. Residues 3182–3361 (GTVLITGASG…QSLAWGLWSE (180 aa)) enclose the Ketoreductase (KR) 2 domain. A Carrier 2 domain is found at 3462–3537 (RQLTDLVRAQ…ALAGHLSTRL (76 aa)). S3497 is subject to O-(pantetheine 4'-phosphoryl)serine.

The spectinabilin polyketide synthase complex is composed of 4 proteins, NorA, NorA', NorB and NorC. The complex comprises 6 modules with a total of 28 catalytic domains catalyzing 7 chain elongations. NorA comprises one module, NorA' two modules, NorB one module and NorC two modules. Requires pantetheine 4'-phosphate as cofactor.

It carries out the reaction 4-nitrobenzoyl-CoA + 6 (S)-methylmalonyl-CoA + malonyl-CoA + 6 NADPH + 12 H(+) = demethyldeoxyspectinabilin + 7 CO2 + 6 NADP(+) + 8 CoA + 5 H2O. It participates in antibiotic biosynthesis. Its pathway is polyketide biosynthesis. Functionally, component of a type I modular polyketide synthase (PKS) that generates the backbone of the antibiotic spectinabilin (also known as neoaureothin), a nitroaryl-substituted polyketide metabolite. This PKS system accepts the unusual starter unit 4-nitrobenzoyl-CoA and extends it by 6 molecules of (S)-methylmalonyl-CoA and a single molecule of malonyl-CoA. The protein is Spectinabilin polyketide synthase system protein NorA' of Streptomyces orinoci (Streptoverticillium orinoci).